Consider the following 343-residue polypeptide: SH2 domain-containing adapter protein D (343 aa).

A disordered region spans residues 1 to 176 (MAKWLRDYLN…PADEYDQPWE (176 aa)). Basic and acidic residues-rich tracts occupy residues 29–40 (DILRAYREQKDL) and 73–82 (IKVEAADMAR). The segment covering 92-102 (EEPEAETEYSD) has biased composition (acidic residues). The segment covering 160 to 176 (RPLEDERPADEYDQPWE) has biased composition (basic and acidic residues). In terms of domain architecture, SH2 spans 225-320 (WFHGPLSRAE…AEHLALLYPV (96 aa)). A disordered region spans residues 322 to 343 (SSQSSQGPCTLAAKPERGQGDP).

Tyrosine phosphorylated by ABL. Specifically expressed in brain.

Its function is as follows. May function as an adapter protein. The polypeptide is SH2 domain-containing adapter protein D (Shd) (Mus musculus (Mouse)).